The sequence spans 123 residues: Large ribosomal subunit protein uL14 (123 aa).

Belongs to the universal ribosomal protein uL14 family. As to quaternary structure, part of the 50S ribosomal subunit. Forms a cluster with proteins L3 and L19. In the 70S ribosome, L14 and L19 interact and together make contacts with the 16S rRNA in bridges B5 and B8.

Its function is as follows. Binds to 23S rRNA. Forms part of two intersubunit bridges in the 70S ribosome. The polypeptide is Large ribosomal subunit protein uL14 (Corynebacterium jeikeium (strain K411)).